Consider the following 195-residue polypeptide: Interferon tau-9 (195 aa).

An N-terminal signal peptide occupies residues 1 to 23 (MAFVLSLLMALVLVSYGPGGSLG). 2 disulfides stabilise this stretch: C24/C122 and C52/C162.

It belongs to the alpha/beta interferon family. IFN-alphaII subfamily. As to expression, constitutively and exclusively expressed in the mononuclear cells of the extraembryonic trophectoderm.

The protein resides in the secreted. In terms of biological role, paracrine hormone primarily responsible for maternal recognition of pregnancy. Interacts with endometrial receptors, probably type I interferon receptors, and blocks estrogen receptor expression, preventing the estrogen-induced increase in oxytocin receptor expression in the endometrium. This results in the suppression of the pulsatile endometrial release of the luteolytic hormone prostaglandin F2-alpha, hindering the regression of the corpus luteum (luteolysis) and therefore a return to ovarian cyclicity. This, and a possible direct effect of IFN-tau on prostaglandin synthesis, leads in turn to continued ovarian progesterone secretion, which stimulates the secretion by the endometrium of the nutrients required for the growth of the conceptus. In summary, displays particularly high antiviral and antiproliferative potency concurrently with particular weak cytotoxicity, high antiluteolytic activity and immunomodulatory properties. In contrast with other IFNs, IFN-tau is not virally inducible. This Ovis aries (Sheep) protein is Interferon tau-9 (IFNT9).